Consider the following 149-residue polypeptide: Transcriptional regulator MraZ (149 aa).

SpoVT-AbrB domains are found at residues 7 to 54 and 83 to 126; these read KYVN…GISH and AVQL…QPQN.

Belongs to the MraZ family. As to quaternary structure, forms oligomers.

It is found in the cytoplasm. The protein resides in the nucleoid. The sequence is that of Transcriptional regulator MraZ from Rickettsia peacockii (strain Rustic).